The chain runs to 1463 residues: DNA polymerase III PolC-type (1463 aa).

The Exonuclease domain maps to 425–581 (YVVFDVETTG…YDAEATGRLL (157 aa)).

It belongs to the DNA polymerase type-C family. PolC subfamily.

Its subcellular location is the cytoplasm. The catalysed reaction is DNA(n) + a 2'-deoxyribonucleoside 5'-triphosphate = DNA(n+1) + diphosphate. Required for replicative DNA synthesis. This DNA polymerase also exhibits 3' to 5' exonuclease activity. The chain is DNA polymerase III PolC-type from Streptococcus suis (strain 98HAH33).